Consider the following 165-residue polypeptide: Phosphopantetheine adenylyltransferase (165 aa).

Ser-10 provides a ligand contact to substrate. Residues 10–11 (SF) and His-18 each bind ATP. Substrate is bound by residues Lys-42, Leu-74, and Arg-88. ATP-binding positions include 89–91 (GLR), Glu-99, and 124–130 (YSYLSSS).

This sequence belongs to the bacterial CoaD family. Homohexamer. Mg(2+) is required as a cofactor.

It is found in the cytoplasm. It catalyses the reaction (R)-4'-phosphopantetheine + ATP + H(+) = 3'-dephospho-CoA + diphosphate. Its pathway is cofactor biosynthesis; coenzyme A biosynthesis; CoA from (R)-pantothenate: step 4/5. Its function is as follows. Reversibly transfers an adenylyl group from ATP to 4'-phosphopantetheine, yielding dephospho-CoA (dPCoA) and pyrophosphate. The chain is Phosphopantetheine adenylyltransferase from Halalkalibacterium halodurans (strain ATCC BAA-125 / DSM 18197 / FERM 7344 / JCM 9153 / C-125) (Bacillus halodurans).